The chain runs to 163 residues: Nucleotide-binding protein CJE0423 (163 aa).

Belongs to the YajQ family.

Functionally, nucleotide-binding protein. This chain is Nucleotide-binding protein CJE0423, found in Campylobacter jejuni (strain RM1221).